The chain runs to 207 residues: LexA repressor (207 aa).

A DNA-binding region (H-T-H motif) is located at residues 28–47; it reads VREIARRFRITPRGAQLHLV. Catalysis depends on for autocatalytic cleavage activity residues serine 119 and lysine 156.

This sequence belongs to the peptidase S24 family. In terms of assembly, homodimer.

It catalyses the reaction Hydrolysis of Ala-|-Gly bond in repressor LexA.. Functionally, represses a number of genes involved in the response to DNA damage (SOS response), including recA and lexA. In the presence of single-stranded DNA, RecA interacts with LexA causing an autocatalytic cleavage which disrupts the DNA-binding part of LexA, leading to derepression of the SOS regulon and eventually DNA repair. This chain is LexA repressor, found in Thermotoga neapolitana (strain ATCC 49049 / DSM 4359 / NBRC 107923 / NS-E).